A 274-amino-acid polypeptide reads, in one-letter code: Large ribosomal subunit protein uL2 (274 aa).

Positions 223–257 are disordered; it reads VAMNPVDHPHGGGEGRTSGGRHPVTPWGIPTKGYK.

Belongs to the universal ribosomal protein uL2 family. As to quaternary structure, part of the 50S ribosomal subunit. Forms a bridge to the 30S subunit in the 70S ribosome.

Its function is as follows. One of the primary rRNA binding proteins. Required for association of the 30S and 50S subunits to form the 70S ribosome, for tRNA binding and peptide bond formation. It has been suggested to have peptidyltransferase activity; this is somewhat controversial. Makes several contacts with the 16S rRNA in the 70S ribosome. This chain is Large ribosomal subunit protein uL2, found in Geobacter sulfurreducens (strain ATCC 51573 / DSM 12127 / PCA).